Reading from the N-terminus, the 502-residue chain is UPF0371 protein CLJ_B0384 (502 aa).

Belongs to the UPF0371 family.

In Clostridium botulinum (strain 657 / Type Ba4), this protein is UPF0371 protein CLJ_B0384.